The sequence spans 185 residues: Elongation factor P (185 aa).

This sequence belongs to the elongation factor P family.

The protein localises to the cytoplasm. The protein operates within protein biosynthesis; polypeptide chain elongation. In terms of biological role, involved in peptide bond synthesis. Stimulates efficient translation and peptide-bond synthesis on native or reconstituted 70S ribosomes in vitro. Probably functions indirectly by altering the affinity of the ribosome for aminoacyl-tRNA, thus increasing their reactivity as acceptors for peptidyl transferase. The sequence is that of Elongation factor P from Lachnoclostridium phytofermentans (strain ATCC 700394 / DSM 18823 / ISDg) (Clostridium phytofermentans).